Reading from the N-terminus, the 101-residue chain is Small ribosomal subunit protein uS14 (101 aa).

Belongs to the universal ribosomal protein uS14 family. As to quaternary structure, part of the 30S ribosomal subunit. Contacts proteins S3 and S10.

Functionally, binds 16S rRNA, required for the assembly of 30S particles and may also be responsible for determining the conformation of the 16S rRNA at the A site. In Shewanella putrefaciens (strain CN-32 / ATCC BAA-453), this protein is Small ribosomal subunit protein uS14.